The sequence spans 317 residues: Methionyl-tRNA formyltransferase (317 aa).

Residue 112–115 (SLLP) coordinates (6S)-5,6,7,8-tetrahydrofolate.

This sequence belongs to the Fmt family.

The catalysed reaction is L-methionyl-tRNA(fMet) + (6R)-10-formyltetrahydrofolate = N-formyl-L-methionyl-tRNA(fMet) + (6S)-5,6,7,8-tetrahydrofolate + H(+). In terms of biological role, attaches a formyl group to the free amino group of methionyl-tRNA(fMet). The formyl group appears to play a dual role in the initiator identity of N-formylmethionyl-tRNA by promoting its recognition by IF2 and preventing the misappropriation of this tRNA by the elongation apparatus. This is Methionyl-tRNA formyltransferase from Geobacter sulfurreducens (strain ATCC 51573 / DSM 12127 / PCA).